The sequence spans 465 residues: Lactaldehyde dehydrogenase (465 aa).

220 to 225 (GSVEVG) contributes to the NAD(+) binding site. Residues glutamate 240 and cysteine 274 contribute to the active site.

This sequence belongs to the aldehyde dehydrogenase family. Homotetramer.

It catalyses the reaction (S)-lactaldehyde + NAD(+) + H2O = (S)-lactate + NADH + 2 H(+). The protein operates within cofactor biosynthesis; coenzyme F420 biosynthesis. Functionally, involved in F420 biosynthesis through the oxidation of lactaldehyde to lactate. The polypeptide is Lactaldehyde dehydrogenase (Methanococcus aeolicus (strain ATCC BAA-1280 / DSM 17508 / OCM 812 / Nankai-3)).